The primary structure comprises 557 residues: Urocanate hydratase (557 aa).

Residues 1–20 (MSNPRHNEREVRSPRGDELN) are disordered. NAD(+)-binding positions include 52–53 (GG), Gln130, 176–178 (GMG), Glu196, Arg201, 242–243 (NA), 263–267 (QTSAH), 273–274 (YL), and Tyr322. Cys410 is a catalytic residue. Position 492 (Gly492) interacts with NAD(+).

The protein belongs to the urocanase family. NAD(+) serves as cofactor.

The protein resides in the cytoplasm. The enzyme catalyses 4-imidazolone-5-propanoate = trans-urocanate + H2O. Its pathway is amino-acid degradation; L-histidine degradation into L-glutamate; N-formimidoyl-L-glutamate from L-histidine: step 2/3. Functionally, catalyzes the conversion of urocanate to 4-imidazolone-5-propionate. This is Urocanate hydratase from Brucella ovis (strain ATCC 25840 / 63/290 / NCTC 10512).